Reading from the N-terminus, the 499-residue chain is Glycerol kinase (499 aa).

An ADP-binding site is contributed by T12. Residues T12, T13, and S14 each contribute to the ATP site. Residue T12 coordinates sn-glycerol 3-phosphate. R16 contributes to the ADP binding site. Residues R82, E83, and Y134 each coordinate sn-glycerol 3-phosphate. 3 residues coordinate glycerol: R82, E83, and Y134. Residue H230 is modified to Phosphohistidine; by HPr. D244 is a sn-glycerol 3-phosphate binding site. Residues D244 and Q245 each contribute to the glycerol site. ADP is bound by residues T266 and G309. Residues T266, G309, Q313, and G410 each coordinate ATP. ADP contacts are provided by G410 and N414.

This sequence belongs to the FGGY kinase family. Homotetramer and homodimer (in equilibrium). Post-translationally, the phosphoenolpyruvate-dependent sugar phosphotransferase system (PTS), including enzyme I, and histidine-containing protein (HPr) are required for the phosphorylation, which leads to the activation of the enzyme.

It catalyses the reaction glycerol + ATP = sn-glycerol 3-phosphate + ADP + H(+). The protein operates within polyol metabolism; glycerol degradation via glycerol kinase pathway; sn-glycerol 3-phosphate from glycerol: step 1/1. Activated by phosphorylation and inhibited by fructose 1,6-bisphosphate (FBP). Its function is as follows. Key enzyme in the regulation of glycerol uptake and metabolism. Catalyzes the phosphorylation of glycerol to yield sn-glycerol 3-phosphate. This is Glycerol kinase from Staphylococcus epidermidis (strain ATCC 12228 / FDA PCI 1200).